The chain runs to 448 residues: tRNA-2-methylthio-N(6)-dimethylallyladenosine synthase (448 aa).

The region spanning 3–120 is the MTTase N-terminal domain; it reads KKLFIKTHGC…LPTMLDSRQG (118 aa). [4Fe-4S] cluster-binding residues include C12, C49, C83, C158, C162, and C165. Residues 144–376 form the Radical SAM core domain; that stretch reads TSDGATAFVS…QERLNQQTMQ (233 aa). The region spanning 379–444 is the TRAM domain; the sequence is RRMVGNTERI…PNSLRGDLAS (66 aa).

This sequence belongs to the methylthiotransferase family. MiaB subfamily. As to quaternary structure, monomer. It depends on [4Fe-4S] cluster as a cofactor.

The protein resides in the cytoplasm. The enzyme catalyses N(6)-dimethylallyladenosine(37) in tRNA + (sulfur carrier)-SH + AH2 + 2 S-adenosyl-L-methionine = 2-methylsulfanyl-N(6)-dimethylallyladenosine(37) in tRNA + (sulfur carrier)-H + 5'-deoxyadenosine + L-methionine + A + S-adenosyl-L-homocysteine + 2 H(+). Functionally, catalyzes the methylthiolation of N6-(dimethylallyl)adenosine (i(6)A), leading to the formation of 2-methylthio-N6-(dimethylallyl)adenosine (ms(2)i(6)A) at position 37 in tRNAs that read codons beginning with uridine. The polypeptide is tRNA-2-methylthio-N(6)-dimethylallyladenosine synthase (Chromohalobacter salexigens (strain ATCC BAA-138 / DSM 3043 / CIP 106854 / NCIMB 13768 / 1H11)).